Consider the following 664-residue polypeptide: SPARC-like protein 1 (664 aa).

Positions 1–16 are cleaved as a signal peptide; sequence MKTGLFFLCLLGTAAA. The interval 25–34 is O-glycosylated at one additional site; that stretch reads SDHSKPTAET. The disordered stretch occupies residues 28–360; that stretch reads SKPTAETVAP…DGPRHSASDD (333 aa). Residues T31 and T40 are each glycosylated (O-linked (GalNAc...) threonine). The O-linked (GalNAc...) serine glycan is linked to S44. A compositionally biased stretch (basic and acidic residues) spans 62–84; sequence DDSHHKAEKSSVLKSKEESHEQS. S76, S84, and S92 each carry phosphoserine. Positions 85-94 are enriched in polar residues; sequence AEQGKSSSQE. Over residues 96-105 the composition is skewed to basic and acidic residues; the sequence is GLKDQEDSDG. Residue T116 is glycosylated (O-linked (GalNAc...) threonine). Residues 120–136 are compositionally biased toward basic and acidic residues; that stretch reads LDIKEDMSEPQEKKLSE. A compositionally biased stretch (polar residues) spans 146–156; the sequence is SSFTDSNQQES. N169 is a glycosylation site (N-linked (GlcNAc...) asparagine). Over residues 170 to 180 the composition is skewed to basic residues; it reads YSHHQLNRSSK. The residue at position 171 (S171) is a Phosphoserine. N176 and N196 each carry an N-linked (GlcNAc...) asparagine glycan. The segment covering 188-199 has biased composition (polar residues); the sequence is QGNQEQDPNISN. Residues 216–235 show a composition bias toward basic and acidic residues; the sequence is DNQERKTELPREHANSKQEE. Acidic residues-rich tracts occupy residues 236 to 248 and 259 to 280; these read DNTQ…EESD and DEFD…EEEN. Residue S272 is modified to Phosphoserine. N280 is a glycosylation site (N-linked (GlcNAc...) asparagine). The segment covering 306–316 has biased composition (basic and acidic residues); it reads SNHKETEEKTV. Residue T331 is glycosylated (O-linked (GalNAc...) threonine). Positions 339–349 are enriched in acidic residues; sequence DDGDDDGDDGG. S358 and S365 each carry phosphoserine. Residues 388-426 are disordered; that stretch reads EKVHENENIGTTEPGEHQEAKKAENSSNEEETSSEGNMR. A glycan (O-linked (GalNAc...) threonine) is linked at T398. The span at 401–411 shows a compositional bias: basic and acidic residues; sequence PGEHQEAKKAE. A glycan (N-linked (GlcNAc...) asparagine) is linked at N412. S420 bears the Phosphoserine mark. The region spanning 432 to 454 is the Follistatin-like domain; it reads SCMSFQCKRGHICKADQQGKPHC. Disulfide bonds link C433-C444, C438-C454, C456-C490, C462-C483, C472-C509, C515-C626, and C634-C650. The region spanning 450–511 is the Kazal-like domain; it reads GKPHCVCQDP…QLDYFGACKS (62 aa). Residue N476 is glycosylated (N-linked (GlcNAc...) asparagine). Residues 622–657 form the EF-hand domain; that stretch reads PMEHCITRFFEECDPNKDKHITLKEWGHCFGIKEED. Ca(2+)-binding residues include D635, N637, D639, H641, and E646.

Belongs to the SPARC family. Post-translationally, N- and O-glycosylated. O-glycosylated with a core 1 or possibly core 8 glycan. Highly expressed in lymph node, brain, heart, lung, skeletal muscle, ovary, small intestine, and colon, with lower levels in placenta, pancreas, testis, spleen, and thymus, and no expression in kidney, liver, and peripheral blood leukocytes.

It is found in the secreted. The protein resides in the extracellular space. It localises to the extracellular matrix. This Homo sapiens (Human) protein is SPARC-like protein 1 (SPARCL1).